The sequence spans 142 residues: Large ribosomal subunit protein uL11 (142 aa).

Belongs to the universal ribosomal protein uL11 family. Part of the ribosomal stalk of the 50S ribosomal subunit. Interacts with L10 and the large rRNA to form the base of the stalk. L10 forms an elongated spine to which L12 dimers bind in a sequential fashion forming a multimeric L10(L12)X complex. In terms of processing, one or more lysine residues are methylated.

In terms of biological role, forms part of the ribosomal stalk which helps the ribosome interact with GTP-bound translation factors. The chain is Large ribosomal subunit protein uL11 from Leptospira borgpetersenii serovar Hardjo-bovis (strain JB197).